The chain runs to 213 residues: ATP-dependent dethiobiotin synthetase BioD (213 aa).

An ATP-binding site is contributed by 13–18; the sequence is GIGKTV. Threonine 17 provides a ligand contact to Mg(2+). Lysine 33 is a catalytic residue. Position 100 (glutamate 100) interacts with Mg(2+). ATP-binding positions include 100 to 103 and 184 to 186; these read EGAG and PRL.

This sequence belongs to the dethiobiotin synthetase family. Homodimer. Mg(2+) serves as cofactor.

The protein localises to the cytoplasm. It carries out the reaction (7R,8S)-7,8-diammoniononanoate + CO2 + ATP = (4R,5S)-dethiobiotin + ADP + phosphate + 3 H(+). Its pathway is cofactor biosynthesis; biotin biosynthesis; biotin from 7,8-diaminononanoate: step 1/2. Functionally, catalyzes a mechanistically unusual reaction, the ATP-dependent insertion of CO2 between the N7 and N8 nitrogen atoms of 7,8-diaminopelargonic acid (DAPA, also called 7,8-diammoniononanoate) to form a ureido ring. This is ATP-dependent dethiobiotin synthetase BioD from Rhodopseudomonas palustris (strain HaA2).